A 70-amino-acid chain; its full sequence is Ranatuerin-2SN1 (70 aa).

The N-terminal stretch at 1–22 is a signal peptide; that stretch reads MFTLKKSLLLIFFLGTISLSLC. A propeptide spans 23–40 (removed in mature form); the sequence is EKERDADDDEVEVIKQEE. An intrachain disulfide couples C65 to C70.

The protein belongs to the frog skin active peptide (FSAP) family. Ranatuerin subfamily. Expressed by the skin glands.

It is found in the secreted. Its function is as follows. Antimicrobial peptide. Weakly active against P.faecalis X29. Not active against fungi. Shows very weak hemolytic activity against human erythrocytes. This is Ranatuerin-2SN1 from Sylvirana spinulosa (Fine-spined frog).